The chain runs to 207 residues: MSPLLRRLLLVALLQLARTQAPVSQFDGPSHQKKVVPWIDVYARATCQPREVVVPLSMELMGNVVKQLVPSCVTVQRCGGCCPDDGLECVPTGQHQVRMQILMIQYPSSQLGEMSLEEHSQCECRPKKKESAVKPDRVAIPHHRPQPRSVPGWDSTPGASSPADIIHPTPAPGSSARLAPSAVNALTPGPAAAAADAAASSIAKGGA.

A signal peptide spans 1–21; it reads MSPLLRRLLLVALLQLARTQA. 3 disulfides stabilise this stretch: Cys47–Cys89, Cys78–Cys122, and Cys82–Cys124. Positions 129 to 139 are enriched in basic and acidic residues; sequence KESAVKPDRVA. The disordered stretch occupies residues 129–178; the sequence is KESAVKPDRVAIPHHRPQPRSVPGWDSTPGASSPADIIHPTPAPGSSARL.

The protein belongs to the PDGF/VEGF growth factor family. In terms of assembly, homodimer; disulfide-linked. Can also form heterodimer with VEGF. In terms of processing, VEGF-B186 is O-glycosylated. In terms of tissue distribution, abundantly expressed in heart, brain, kidney and skeletal muscle.

The protein resides in the secreted. In terms of biological role, growth factor for endothelial cells. VEGF-B167 binds heparin and neuropilin-1 whereas the binding to neuropilin-1 of VEGF-B186 is regulated by proteolysis. VEGF-B seems to be required for normal heart function in adult but is not required for proper development of the cardiovascular system either during development or for angiogenesis in adults. The chain is Vascular endothelial growth factor B (Vegfb) from Mus musculus (Mouse).